The primary structure comprises 61 residues: Large ribosomal subunit protein eL37 (61 aa).

4 residues coordinate Zn(2+): cysteine 19, cysteine 22, cysteine 34, and cysteine 37. The C4-type zinc-finger motif lies at 19–37; it reads CRRCGRNAYNVSKHYCAAC.

The protein belongs to the eukaryotic ribosomal protein eL37 family. Zn(2+) serves as cofactor.

Functionally, binds to the 23S rRNA. The protein is Large ribosomal subunit protein eL37 of Saccharolobus islandicus (strain L.S.2.15 / Lassen #1) (Sulfolobus islandicus).